The following is a 20-amino-acid chain: GPPKVAPGKXISASFGGEWL.

Positions 1–20 (GPPKVAPGKXISASFGGEWL) are disordered.

Belongs to the expansin family. Expansin B subfamily.

Its subcellular location is the secreted. It localises to the cell wall. It is found in the membrane. May aid fertilization by loosening the cell wall of the stigma and style, thereby facilitating penetration of the pollen tube. Acts selectively on grass cell walls, which are relatively poor in pectins and xyloglucans and rich in glucuronoarabinoxylans and (1-3),(1-4)-beta-D-glucans, when compared with cell walls of other angiosperms, including other monocots. The sequence is that of Expansin-B from Paspalum notatum (Bahia grass).